The chain runs to 239 residues: Tetraspanin-9 (239 aa).

Topologically, residues 1–13 (MARGCLCCLKYTM) are cytoplasmic. A helical membrane pass occupies residues 14–34 (FLFNLIFWLCGCGLLGVGIWL). Over 35-55 (SVSQGNFATFSPSFPSLSAAN) the chain is Extracellular. A helical transmembrane segment spans residues 56–76 (LVIAIGTIVMVTGFLGCLGAI). Topologically, residues 77 to 85 (KENKCLLLS) are cytoplasmic. The chain crosses the membrane as a helical span at residues 86–106 (FFIVLLIILLAELILIILFFV). The Extracellular segment spans residues 107–203 (YMDKVNENAK…VKLWFDDNKH (97 aa)). N-linked (GlcNAc...) asparagine glycosylation occurs at Asn180. The helical transmembrane segment at 204–224 (VLGTVGMCILIMQILGMAFSM) threads the bilayer. Residues 225 to 239 (TLFQHIHRTGKKYDA) are Cytoplasmic-facing.

The protein belongs to the tetraspanin (TM4SF) family. As to quaternary structure, found in a complex with GP6. In terms of processing, glycosylated. As to expression, strongly expressed in megakaryocytes, platelets and lung. Weakly expressed in bone marrow, brain and kidney (at protein level).

It is found in the membrane. In Mus musculus (Mouse), this protein is Tetraspanin-9 (Tspan9).